Here is a 435-residue protein sequence, read N- to C-terminus: Astacin-like metalloendopeptidase (435 aa).

The signal sequence occupies residues 1–23 (MGIMGSLWPWILTMLSLLGLSMG). Residues 85–282 (RLLSVTNNKW…TRVCRLYNCS (198 aa)) form the Peptidase M12A domain. Disulfide bonds link Cys-132/Cys-281 and Cys-153/Cys-172. Residue His-182 participates in Zn(2+) binding. Glu-183 is an active-site residue. Residues His-186 and His-192 each contribute to the Zn(2+) site. Residues 318–329 (SEESGSSAPSGS) show a composition bias toward low complexity. Residues 318–356 (SEESGSSAPSGSRTGGQSIAGLGNSQQGWEHPPQSTFSV) are disordered. A compositionally biased stretch (polar residues) spans 340–355 (GNSQQGWEHPPQSTFS).

As to quaternary structure, interacts (via N-terminal domain) with SPACA3; the interaction occurs during fertilization. Zn(2+) serves as cofactor. In terms of tissue distribution, ovary-specific. Expressed in secondary, antral and Graafian follicle oocytes. Expressed in the egg cells. Not detected in two-cell embryos. Not detected in naked oocytes, oocytes in primordial or unilaminar primary follicles, or in any other ovarian cells at pre-pubertal, pubertal or adult stages (at protein level). Ovary-specific.

It is found in the cytoplasm. Its subcellular location is the cell membrane. It localises to the cytoplasmic vesicle. The protein localises to the secretory vesicle. The protein resides in the cortical granule. Its activity is regulated as follows. Inhibited by wide spectrum metalloproteinase inhibitor batimastat (BB-94). Also inhibited by EDTA. In terms of biological role, oocyte-specific oolemmal receptor involved in sperm and egg adhesion and fertilization. Plays a role in the polyspermy inhibition. Probably acts as a protease for the post-fertilization cleavage of ZP2. Cleaves the sperm-binding ZP2 at the surface of the zona pellucida after fertilization and cortical granule exocytosis, rendering the zona pellucida unable to support further sperm binding. The sequence is that of Astacin-like metalloendopeptidase from Mus musculus (Mouse).